The sequence spans 426 residues: MKHLTEMVRQHKAGKTNGIYAVCSAHPLVLEAAIRYASANQTPLLIEATSNQVDQFGGYTGMTPADFRGFVCQLADSLNFPQDALILGGDHLGPNRWQNLPAAQAMANADDLIKSYVAAGFKKIHLDCSMSCQDDPIPLTDDIVAERAARLAKVAEETCREHFGEADLEYVIGTEVPVPGGAHETLSELAVTTPDAARATLEAHRHAFEKQGLNAIWPRIIALVVQPGVEFDHTNVIDYQPAKASALSQMVENYETLIFEAHSTDYQTPQSLRQLVIDHFAILKVGPALTFALREALFSLAAIEEELVPAKACSGLRQVQEDVMLDRPEYWQSHYHGDGNARRLARGYSYSDRVRYYWPDSQIDDAFAHLVRNLADSPIPLPLISQYLPLQYVKVRSGELQPTPRELIINHIQDILAQYHTACEGQ.

The protein belongs to the GatZ/KbaZ family. KbaZ subfamily. Forms a complex with KbaY.

It functions in the pathway carbohydrate metabolism; D-tagatose 6-phosphate degradation; D-glyceraldehyde 3-phosphate and glycerone phosphate from D-tagatose 6-phosphate: step 2/2. Functionally, component of the tagatose-1,6-bisphosphate aldolase KbaYZ that is required for full activity and stability of the Y subunit. Could have a chaperone-like function for the proper and stable folding of KbaY. When expressed alone, KbaZ does not show any aldolase activity. This is D-tagatose-1,6-bisphosphate aldolase subunit KbaZ from Escherichia coli (strain 55989 / EAEC).